An 84-amino-acid polypeptide reads, in one-letter code: Hepcidin (84 aa).

Residues 1 to 24 (MALSSQIWAACLLLLLLLASLTSG) form the signal peptide. Residues 25–54 (SVFPQQTGQLAELQPQDRAGARAGWTPMLQ) constitute a propeptide that is removed on maturation. 3 cysteine pairs are disulfide-bonded: Cys69–Cys72, Cys70–Cys78, and Cys73–Cys81.

It belongs to the hepcidin family. In terms of assembly, interacts with SLC40A1; this interaction promotes SLC40A1 rapid ubiquitination.

It is found in the secreted. Its function is as follows. Liver-produced hormone that constitutes the main circulating regulator of iron absorption and distribution across tissues. Acts by promoting endocytosis and degradation of ferroportin/SLC40A1, leading to the retention of iron in iron-exporting cells and decreased flow of iron into plasma. Controls the major flows of iron into plasma: absorption of dietary iron in the intestine, recycling of iron by macrophages, which phagocytose old erythrocytes and other cells, and mobilization of stored iron from hepatocytes. In terms of biological role, has strong antimicrobial activity against E.coli ML35P N.cinerea and weaker against S.epidermidis, S.aureus and group b streptococcus bacteria. Active against the fungus C.albicans. No activity against P.aeruginosa. The sequence is that of Hepcidin (HAMP) from Pongo abelii (Sumatran orangutan).